The following is a 336-amino-acid chain: Protein phosphatase 1 regulatory subunit pprA (336 aa).

The segment covering 1 to 10 has biased composition (low complexity); sequence MSEQNTIINS. Positions 1 to 24 are disordered; the sequence is MSEQNTIINSEEIKENEKIESETE. The span at 11 to 21 shows a compositional bias: basic and acidic residues; that stretch reads EEIKENEKIES. 12 LRR repeats span residues 26 to 47, 49 to 70, 71 to 92, 93 to 114, 115 to 136, 139 to 160, 161 to 182, 183 to 204, 205 to 225, 229 to 250, 251 to 272, and 273 to 294; these read PITY…YNIP, TLLD…NHLK, NLKK…DQLK, ELES…KDFQ, SLTY…SIKD, KIKE…QELV, PIKN…ENLV, NIET…NHLS, HLRI…KGLV, CLEE…QSLK, QLRT…NELP, and DLDE…EQQV. An LRRCT domain is found at 306–336; that stretch reads NPVATHVQYRRMFINMFPQLKQLDATMVKRN.

It belongs to the SDS22 family.

Its subcellular location is the nucleus. Its function is as follows. Regulatory subunit of protein phosphatase 1. This Dictyostelium discoideum (Social amoeba) protein is Protein phosphatase 1 regulatory subunit pprA (pprA).